We begin with the raw amino-acid sequence, 156 residues long: Ribosomal RNA large subunit methyltransferase H (156 aa).

S-adenosyl-L-methionine is bound by residues Leu73, Gly104, and 123–128 (LSPLTF).

It belongs to the RNA methyltransferase RlmH family. In terms of assembly, homodimer.

It is found in the cytoplasm. It catalyses the reaction pseudouridine(1915) in 23S rRNA + S-adenosyl-L-methionine = N(3)-methylpseudouridine(1915) in 23S rRNA + S-adenosyl-L-homocysteine + H(+). Specifically methylates the pseudouridine at position 1915 (m3Psi1915) in 23S rRNA. The chain is Ribosomal RNA large subunit methyltransferase H from Thioalkalivibrio sulfidiphilus (strain HL-EbGR7).